Here is a 513-residue protein sequence, read N- to C-terminus: Sugar transport protein 7 (513 aa).

Residues 1–26 lie on the Cytoplasmic side of the membrane; sequence MAGGSFGPTGVAKERAEQYQGKVTSY. The next 12 membrane-spanning stretches (helical) occupy residues 27-47, 84-104, 121-141, 144-164, 171-191, 205-225, 286-306, 324-344, 351-371, 387-407, 427-447, and 452-472; these read VIIACLVAAIGGSIFGYDIGI, GLAAFTSSLYLAGLVSTLVAS, ISFLIGSGLNAGAVNLAMLLA, IMLGVGIGFGNQAVPLYLSEV, GGLNMMFQLATTIGIFTANMV, LSLGLAAFPALLMTLGGYFLP, LVMAICMPMFQILTGINSILF, YSSALTGAVLVLSTFISIGLV, ALLITGGIQMIICQVIVAVIL, VIVVIFICLFVVAFGWSWGPL, ITVAVNLLFTFIIAQAFLGLL, and FGIFLFFAGWVTVMTIFVYFL. Residues 473-513 are Cytoplasmic-facing; the sequence is LPETKGVPIEEMTLLWSKHWFWKKVLPDATNLEDESKNVSV.

It belongs to the major facilitator superfamily. Sugar transporter (TC 2.A.1.1) family.

It is found in the cell membrane. Its function is as follows. Mediates an active uptake of hexoses, probably by sugar/hydrogen symport. The protein is Sugar transport protein 7 (STP7) of Arabidopsis thaliana (Mouse-ear cress).